The following is a 73-amino-acid chain: Protein WFDC10B (73 aa).

An N-terminal signal peptide occupies residues 1-21 (MAPQTLLLVLVLCVLLLQAQG). The WAP domain occupies 28 to 73 (RMQRIKVCEKRPSIDLCIHHCSYFQKCETNKICCSAFCGNICMSIL).

In terms of tissue distribution, ubiquitously expressed.

Its subcellular location is the secreted. In Homo sapiens (Human), this protein is Protein WFDC10B (WFDC10B).